Consider the following 354-residue polypeptide: Elongation factor Ts (354 aa).

Positions 81-84 are involved in Mg(2+) ion dislocation from EF-Tu; it reads TDFV.

Belongs to the EF-Ts family.

The protein resides in the cytoplasm. Associates with the EF-Tu.GDP complex and induces the exchange of GDP to GTP. It remains bound to the aminoacyl-tRNA.EF-Tu.GTP complex up to the GTP hydrolysis stage on the ribosome. The sequence is that of Elongation factor Ts from Campylobacter concisus (strain 13826).